Here is a 289-residue protein sequence, read N- to C-terminus: Glycine--tRNA ligase alpha subunit (289 aa).

This sequence belongs to the class-II aminoacyl-tRNA synthetase family. In terms of assembly, tetramer of two alpha and two beta subunits.

It is found in the cytoplasm. The catalysed reaction is tRNA(Gly) + glycine + ATP = glycyl-tRNA(Gly) + AMP + diphosphate. This Nitratidesulfovibrio vulgaris (strain ATCC 29579 / DSM 644 / CCUG 34227 / NCIMB 8303 / VKM B-1760 / Hildenborough) (Desulfovibrio vulgaris) protein is Glycine--tRNA ligase alpha subunit.